The primary structure comprises 290 residues: Arylamine N-acetyltransferase 1 (290 aa).

Position 1 is an N-acetylmethionine (Met1). Cys68 acts as the Acyl-thioester intermediate in catalysis. CoA-binding residues include Thr103 and Gly104. 106–107 is a binding site for substrate; sequence IH. Catalysis depends on residues His107 and Asp122. CoA-binding residues include Tyr208 and Ser214.

The protein belongs to the arylamine N-acetyltransferase family.

The protein localises to the cytoplasm. It catalyses the reaction an arylamine + acetyl-CoA = an N-acetylarylamine + CoA. Participates in the detoxification of a plethora of hydrazine and arylamine drugs. Catalyzes the N- or O-acetylation of various arylamine and heterocyclic amine substrates and is able to bioactivate several known carcinogens. The sequence is that of Arylamine N-acetyltransferase 1 (NAT1) from Homo sapiens (Human).